A 339-amino-acid chain; its full sequence is Ketol-acid reductoisomerase (NADP(+)) (339 aa).

The region spanning 1–182 is the KARI N-terminal Rossmann domain; the sequence is MRVYYDRDAD…GGGRAGIIET (182 aa). NADP(+) contacts are provided by residues 24 to 27, Arg48, Ser51, Ser53, and 83 to 86; these read YGSQ and DELQ. His108 is an active-site residue. Gly134 serves as a coordination point for NADP(+). Residues 183–328 form the KARI C-terminal knotted domain; it reads TFKEECETDL…ARLRDMMPWI (146 aa). Mg(2+)-binding residues include Asp191, Glu195, Glu227, and Glu231. Residue Ser252 participates in substrate binding.

This sequence belongs to the ketol-acid reductoisomerase family. Requires Mg(2+) as cofactor.

It carries out the reaction (2R)-2,3-dihydroxy-3-methylbutanoate + NADP(+) = (2S)-2-acetolactate + NADPH + H(+). The enzyme catalyses (2R,3R)-2,3-dihydroxy-3-methylpentanoate + NADP(+) = (S)-2-ethyl-2-hydroxy-3-oxobutanoate + NADPH + H(+). The protein operates within amino-acid biosynthesis; L-isoleucine biosynthesis; L-isoleucine from 2-oxobutanoate: step 2/4. It participates in amino-acid biosynthesis; L-valine biosynthesis; L-valine from pyruvate: step 2/4. Functionally, involved in the biosynthesis of branched-chain amino acids (BCAA). Catalyzes an alkyl-migration followed by a ketol-acid reduction of (S)-2-acetolactate (S2AL) to yield (R)-2,3-dihydroxy-isovalerate. In the isomerase reaction, S2AL is rearranged via a Mg-dependent methyl migration to produce 3-hydroxy-3-methyl-2-ketobutyrate (HMKB). In the reductase reaction, this 2-ketoacid undergoes a metal-dependent reduction by NADPH to yield (R)-2,3-dihydroxy-isovalerate. The chain is Ketol-acid reductoisomerase (NADP(+)) from Bradyrhizobium sp. (strain ORS 278).